Here is a 1501-residue protein sequence, read N- to C-terminus: Opaque-specific ABC transporter CDR3 (1501 aa).

Topologically, residues Met-1 to Asp-502 are cytoplasmic. Residues Thr-58 to Phe-87 are disordered. In terms of domain architecture, ABC transporter 1 spans Lys-140–Asp-395. Residues Ile-503–Val-523 form a helical membrane-spanning segment. An N-linked (GlcNAc...) asparagine glycan is attached at Asn-530. The next 5 membrane-spanning stretches (helical) occupy residues Val-540–Tyr-560, Phe-589–Phe-609, Gly-614–Phe-634, Leu-653–Gly-673, and Phe-755–Thr-775. At Asn-776–Ser-1175 the chain is on the cytoplasmic side. An ABC transporter 2 domain is found at Phe-840–Ala-1083. Position 876–883 (Gly-876–Thr-883) interacts with ATP. Transmembrane regions (helical) follow at residues Tyr-1176–Tyr-1196, Ile-1212–Thr-1232, Ile-1261–Leu-1281, Leu-1297–Ile-1317, Tyr-1325–Ala-1345, Phe-1353–Leu-1375, and Gly-1451–Phe-1471.

Belongs to the ABC transporter superfamily. ABCG family. PDR (TC 3.A.1.205) subfamily.

It localises to the membrane. This Candida albicans (Yeast) protein is Opaque-specific ABC transporter CDR3 (CDR3).